The following is a 1334-amino-acid chain: WASH complex subunit 2 (1334 aa).

The interval 1-219 is sufficient for interaction with WASHC3, WASHC4 and WASHC5; required for interaction with WASHC1; the sequence is MNRTSPDSER…VGSDRGSIVD (219 aa). A phosphoserine mark is found at serine 157, serine 159, serine 204, serine 205, and serine 209. The span at 201-213 shows a compositional bias: low complexity; it reads GELSSEEGSVGSD. A disordered region spans residues 201–471; that stretch reads GELSSEEGSV…SKPSKTDKVK (271 aa). Composition is skewed to acidic residues over residues 219–232 and 249–274; these read DSED…SDED and SDEE…EDIE. Serine 284 carries the post-translational modification Phosphoserine. A compositionally biased stretch (basic and acidic residues) spans 289–324; that stretch reads LAARIKGDISNQRKEGQTDGKPQKTVKEKKERRTPA. Threonine 322 bears the Phosphothreonine mark. Residues 347 to 594 form a sufficient for interaction with CCDC93 region; sequence SRGGLFSNGQ…QTSSLQPQSQ (248 aa). Residues 348-1334 are interaction with VPS35; that stretch reads RGGLFSNGQG…DDPLNAFGSQ (987 aa). The short motif at 358–368 is the LFa 1 element; sequence LFDDEDESDLF. A Phosphoserine modification is found at serine 388. Short sequence motifs (LFa) lie at residues 441–457 and 476–485; these read LFDD…NNFF and IFDDDEGDLF. Over residues 442 to 454 the composition is skewed to acidic residues; that stretch reads FDDDDNDNDEDDN. Residues 492–650 are disordered; it reads LPAASVSQTH…DSGATQGQEA (159 aa). The span at 513–530 shows a compositional bias: polar residues; that stretch reads LPSSKNLKLVSETKTQKG. 2 short sequence motifs (LFa) span residues 531–542 and 566–577; these read LFSDEEDSEDLF and LFGDEDEEDSLF. Phosphoserine occurs at positions 533 and 538. Positions 541–561 are enriched in low complexity; it reads LFSSQSSSKPKSASLPSSQPP. 2 stretches are compositionally biased toward polar residues: residues 584–594 and 601–611; these read KQTSSLQPQSQ and EQPSKKTSALL. Phosphoserine is present on residues serine 613 and serine 614. Basic and acidic residues predominate over residues 625–639; the sequence is SHTKLASDNKSKGEL. 2 short sequence motifs (LFa) span residues 658–670 and 686–698; these read LFED…VDLF and LFED…SSLF. A disordered region spans residues 691–837; sequence AESGSSLFGL…SRPKSTGVFQ (147 aa). 5 positions are modified to phosphoserine: serine 723, serine 747, serine 752, serine 783, and serine 798. Residues 800–811 show a composition bias toward acidic residues; sequence FDEDEDKVEDES. The span at 818–830 shows a compositional bias: basic and acidic residues; it reads DGREKGLKTDSRP. 2 short sequence motifs (LFa) span residues 835 to 843 and 852 to 858; these read VFQDEELLF and DPDVDLF. Disordered regions lie at residues 862-948 and 1014-1225; these read KKIR…PSSR and AQAD…SKTH. Residues serine 870 and serine 873 each carry the phosphoserine modification. The LFa 10 motif lies at 874–884; sequence LFGDDEDDDLF. Basic and acidic residues predominate over residues 894-906; that stretch reads PEKKGTLKKDHPV. Over residues 908–919 the composition is skewed to polar residues; it reads LKNQDPLDSTQG. The interaction with phospholipids stretch occupies residues 932–1334; that stretch reads QDSSGLTPFK…DDPLNAFGSQ (403 aa). Basic residues predominate over residues 1023–1041; sequence NKSRVKVRGKRRPQTRAAR. The interval 1024–1042 is required for interaction with F-actin-capping protein subunit alpha (CAPZA1 or CAPZA2 or CAPZA3); that stretch reads KSRVKVRGKRRPQTRAARR. Phosphoserine is present on residues serine 1049, serine 1067, serine 1084, and serine 1109. 3 consecutive short sequence motifs (LFa) follow at residues 1124–1131, 1164–1178, and 1194–1202; these read LFDSGDIF, AFPD…EDLF, and LLEDEEDLF. A phosphoserine mark is found at serine 1169, serine 1172, and serine 1173. Positions 1203–1225 are enriched in basic and acidic residues; the sequence is ADPRGKKNERKPDSHQDSVSKTH. 3 short sequence motifs (LFa) span residues 1227 to 1233, 1255 to 1263, and 1283 to 1292; these read IFEDDIF, LFDDNIDIF, and MFDDDTDDIF. The segment at 1294–1334 is disordered; sequence SGLQAKASKPKSQSAEAASEQRSEHKVASIFDDPLNAFGSQ. The segment covering 1297–1311 has biased composition (low complexity); it reads QAKASKPKSQSAEAA. Residues 1323-1331 carry the LFa 17 motif; the sequence is IFDDPLNAF. Position 1333 is a phosphoserine (serine 1333).

This sequence belongs to the FAM21 family. As to quaternary structure, component of the WASH core complex also described as WASH regulatory complex (SHRC) composed of WASHC1, WASHC2, WASHC3, WASHC4 and WASHC5; in the complex interacts (via N-terminus) directly with WASHC1. The WASH core complex associates with the F-actin-capping protein dimer (formed by CAPZA1, CAPZA2 or CAPZA3 and CAPZB) in a transient or substoichiometric manner which was initially described as WASH complex. Interacts with VPS35; mediates the association with the retromer CSC complex. Interacts with FKBP15. Interacts with CCDC93, CCDC22, VPS35L; indicative for an association of the WASH core complex with the CCC and retriever complexes. Directly interacts with TBC1D23.

It is found in the early endosome membrane. Its subcellular location is the cell membrane. In terms of biological role, acts as a component of the WASH core complex that functions as a nucleation-promoting factor (NPF) at the surface of endosomes, where it recruits and activates the Arp2/3 complex to induce actin polymerization, playing a key role in the fission of tubules that serve as transport intermediates during endosome sorting. Mediates the recruitment of the WASH core complex to endosome membranes via binding to phospholipids and VPS35 of the retromer CSC. Mediates the recruitment of the F-actin-capping protein dimer to the WASH core complex probably promoting localized F-actin polymerization needed for vesicle scission. Via its C-terminus binds various phospholipids, most strongly phosphatidylinositol 4-phosphate (PtdIns-(4)P), phosphatidylinositol 5-phosphate (PtdIns-(5)P) and phosphatidylinositol 3,5-bisphosphate (PtdIns-(3,5)P2). Involved in the endosome-to-plasma membrane trafficking and recycling of SNX27-retromer-dependent cargo proteins, such as GLUT1. Required for the association of DNAJC13, ENTR1, ANKRD50 with retromer CSC subunit VPS35. Required for the endosomal recruitment of CCC and retriever complexes subunits COMMD1 and CCDC93 as well as the retrievere complex subunit VPS35L. The polypeptide is WASH complex subunit 2 (Mus musculus (Mouse)).